We begin with the raw amino-acid sequence, 300 residues long: NAD kinase (300 aa).

Aspartate 75 functions as the Proton acceptor in the catalytic mechanism. NAD(+) contacts are provided by residues 75–76 (DG), 149–150 (ND), arginine 177, aspartate 179, 190–195 (TAYALS), alanine 214, and glutamine 248.

Belongs to the NAD kinase family. A divalent metal cation serves as cofactor.

It is found in the cytoplasm. It catalyses the reaction NAD(+) + ATP = ADP + NADP(+) + H(+). Involved in the regulation of the intracellular balance of NAD and NADP, and is a key enzyme in the biosynthesis of NADP. Catalyzes specifically the phosphorylation on 2'-hydroxyl of the adenosine moiety of NAD to yield NADP. The protein is NAD kinase of Burkholderia pseudomallei (strain K96243).